Reading from the N-terminus, the 95-residue chain is MALERSDVEKIAHLARLGLSEADLPRTTETLNNILGLIDQMQAVDTSGVEPLAHPLEATQRLRPDAVTETDHRDAYQTIAPAVEEGLYLVPKVIE.

It belongs to the GatC family. Heterotrimer of A, B and C subunits.

It catalyses the reaction L-glutamyl-tRNA(Gln) + L-glutamine + ATP + H2O = L-glutaminyl-tRNA(Gln) + L-glutamate + ADP + phosphate + H(+). It carries out the reaction L-aspartyl-tRNA(Asn) + L-glutamine + ATP + H2O = L-asparaginyl-tRNA(Asn) + L-glutamate + ADP + phosphate + 2 H(+). Functionally, allows the formation of correctly charged Asn-tRNA(Asn) or Gln-tRNA(Gln) through the transamidation of misacylated Asp-tRNA(Asn) or Glu-tRNA(Gln) in organisms which lack either or both of asparaginyl-tRNA or glutaminyl-tRNA synthetases. The reaction takes place in the presence of glutamine and ATP through an activated phospho-Asp-tRNA(Asn) or phospho-Glu-tRNA(Gln). The polypeptide is Aspartyl/glutamyl-tRNA(Asn/Gln) amidotransferase subunit C (Pseudomonas paraeruginosa (strain DSM 24068 / PA7) (Pseudomonas aeruginosa (strain PA7))).